Here is a 64-residue protein sequence, read N- to C-terminus: Large ribosomal subunit protein bL28 (64 aa).

Belongs to the bacterial ribosomal protein bL28 family.

The chain is Large ribosomal subunit protein bL28 from Bifidobacterium longum (strain NCC 2705).